The primary structure comprises 260 residues: Ribosomal RNA small subunit methyltransferase J (260 aa).

S-adenosyl-L-methionine is bound by residues 125-126 (ER) and D179.

This sequence belongs to the methyltransferase superfamily. RsmJ family.

The protein localises to the cytoplasm. The catalysed reaction is guanosine(1516) in 16S rRNA + S-adenosyl-L-methionine = N(2)-methylguanosine(1516) in 16S rRNA + S-adenosyl-L-homocysteine + H(+). Functionally, specifically methylates the guanosine in position 1516 of 16S rRNA. This chain is Ribosomal RNA small subunit methyltransferase J, found in Pseudomonas fluorescens (strain Pf0-1).